The sequence spans 169 residues: Crossover junction endodeoxyribonuclease RuvC (169 aa).

Residues Asp11, Glu71, and Asp143 contribute to the active site. The Mg(2+) site is built by Asp11, Glu71, and Asp143.

This sequence belongs to the RuvC family. Homodimer which binds Holliday junction (HJ) DNA. The HJ becomes 2-fold symmetrical on binding to RuvC with unstacked arms; it has a different conformation from HJ DNA in complex with RuvA. In the full resolvosome a probable DNA-RuvA(4)-RuvB(12)-RuvC(2) complex forms which resolves the HJ. The cofactor is Mg(2+).

Its subcellular location is the cytoplasm. It catalyses the reaction Endonucleolytic cleavage at a junction such as a reciprocal single-stranded crossover between two homologous DNA duplexes (Holliday junction).. Its function is as follows. The RuvA-RuvB-RuvC complex processes Holliday junction (HJ) DNA during genetic recombination and DNA repair. Endonuclease that resolves HJ intermediates. Cleaves cruciform DNA by making single-stranded nicks across the HJ at symmetrical positions within the homologous arms, yielding a 5'-phosphate and a 3'-hydroxyl group; requires a central core of homology in the junction. The consensus cleavage sequence is 5'-(A/T)TT(C/G)-3'. Cleavage occurs on the 3'-side of the TT dinucleotide at the point of strand exchange. HJ branch migration catalyzed by RuvA-RuvB allows RuvC to scan DNA until it finds its consensus sequence, where it cleaves and resolves the cruciform DNA. The sequence is that of Crossover junction endodeoxyribonuclease RuvC from Allorhizobium ampelinum (strain ATCC BAA-846 / DSM 112012 / S4) (Agrobacterium vitis (strain S4)).